Here is a 299-residue protein sequence, read N- to C-terminus: Pyridoxal 5'-phosphate synthase subunit PdxS (299 aa).

D24 is a D-ribose 5-phosphate binding site. Catalysis depends on K81, which acts as the Schiff-base intermediate with D-ribose 5-phosphate. G153 contributes to the D-ribose 5-phosphate binding site. R165 provides a ligand contact to D-glyceraldehyde 3-phosphate. D-ribose 5-phosphate contacts are provided by residues G219 and 240–241; that span reads GS.

The protein belongs to the PdxS/SNZ family. In the presence of PdxT, forms a dodecamer of heterodimers.

The enzyme catalyses aldehydo-D-ribose 5-phosphate + D-glyceraldehyde 3-phosphate + L-glutamine = pyridoxal 5'-phosphate + L-glutamate + phosphate + 3 H2O + H(+). It participates in cofactor biosynthesis; pyridoxal 5'-phosphate biosynthesis. Its function is as follows. Catalyzes the formation of pyridoxal 5'-phosphate from ribose 5-phosphate (RBP), glyceraldehyde 3-phosphate (G3P) and ammonia. The ammonia is provided by the PdxT subunit. Can also use ribulose 5-phosphate and dihydroxyacetone phosphate as substrates, resulting from enzyme-catalyzed isomerization of RBP and G3P, respectively. The polypeptide is Pyridoxal 5'-phosphate synthase subunit PdxS (Methanococcus maripaludis (strain DSM 14266 / JCM 13030 / NBRC 101832 / S2 / LL)).